A 393-amino-acid chain; its full sequence is MVAAAPSNKERLPDMMTSIRLDQSGRVEIIDQLLLPHSVVWMPVSTPEEAFDAIKTMRIRGAPAIASLAALTLRSYLSSSSSPVSSSSSSSDVISWVGQTIDYLQSSRPTAVNLGEAMDRIRAALKDSEAQNQTAGDIIQRVKKICGDVHDEDLERNMKMGRLGAEWLWKKRGGGKKGLKVMTVCNTGSLATSGYGTAIGVITALFQEDHLDTAYYAQTTPYHQGSRLTSLELTTLQIPACMICDTMLGSLFQHEDIDGVIVGADRVVKNGDTANKIGTYQAAVLAQRHNVPFMVVAPVTTIDLSLPTGAEIHIEHRPAAEATQVRGLDTETGKLSVVRITPEGVGEGDKPWQRVYNPSFDVTPAELISAVVTEKGVAERKEGEKSIDVASIC.

D265 (proton donor) is an active-site residue.

The protein belongs to the eIF-2B alpha/beta/delta subunits family. MtnA subfamily.

Its subcellular location is the cytoplasm. The protein localises to the nucleus. It catalyses the reaction 5-(methylsulfanyl)-alpha-D-ribose 1-phosphate = 5-(methylsulfanyl)-D-ribulose 1-phosphate. Its pathway is amino-acid biosynthesis; L-methionine biosynthesis via salvage pathway; L-methionine from S-methyl-5-thio-alpha-D-ribose 1-phosphate: step 1/6. In terms of biological role, catalyzes the interconversion of methylthioribose-1-phosphate (MTR-1-P) into methylthioribulose-1-phosphate (MTRu-1-P). This chain is Methylthioribose-1-phosphate isomerase, found in Cryptococcus neoformans var. neoformans serotype D (strain JEC21 / ATCC MYA-565) (Filobasidiella neoformans).